The sequence spans 72 residues: Crustacean hyperglycemic hormone (72 aa).

Intrachain disulfides connect C7–C43, C23–C39, and C26–C52. The residue at position 72 (V72) is a Valine amide.

The protein resides in the secreted. Hormone found in the sinus gland of isopods and decapods which controls the blood sugar level. Has a secretagogue action over the amylase released from the midgut gland. May act as a stress hormone and may be involved in the control of molting and reproduction. This chain is Crustacean hyperglycemic hormone, found in Penaeus schmitti (White shrimp).